Reading from the N-terminus, the 155-residue chain is MKLQLCAVGRLRSGPERDLVEDYLARFERTGRPLGLPAVQLLELEDRKGGGMEAEADLIAKAVAPGAALVVLDERGRTLSSPEFADHLAHWRDSGRDVALAIGGADGLAPRLRDRADLAISLGRMVWPHMLVRVMLAEQLYRAATILAGSPYHRV.

Residues L72, G103, and 122–127 (LGRMVW) each bind S-adenosyl-L-methionine.

This sequence belongs to the RNA methyltransferase RlmH family. Homodimer.

It localises to the cytoplasm. It carries out the reaction pseudouridine(1915) in 23S rRNA + S-adenosyl-L-methionine = N(3)-methylpseudouridine(1915) in 23S rRNA + S-adenosyl-L-homocysteine + H(+). In terms of biological role, specifically methylates the pseudouridine at position 1915 (m3Psi1915) in 23S rRNA. This chain is Ribosomal RNA large subunit methyltransferase H, found in Cereibacter sphaeroides (strain KD131 / KCTC 12085) (Rhodobacter sphaeroides).